The sequence spans 602 residues: Elongation factor 4 (602 aa).

Residues 7 to 188 (ENIRNFSIIA…SIIRLVPPPK (182 aa)) enclose the tr-type G domain. Residues 19–24 (DHGKST) and 135–138 (NKID) each bind GTP.

This sequence belongs to the TRAFAC class translation factor GTPase superfamily. Classic translation factor GTPase family. LepA subfamily.

Its subcellular location is the cell inner membrane. It catalyses the reaction GTP + H2O = GDP + phosphate + H(+). Its function is as follows. Required for accurate and efficient protein synthesis under certain stress conditions. May act as a fidelity factor of the translation reaction, by catalyzing a one-codon backward translocation of tRNAs on improperly translocated ribosomes. Back-translocation proceeds from a post-translocation (POST) complex to a pre-translocation (PRE) complex, thus giving elongation factor G a second chance to translocate the tRNAs correctly. Binds to ribosomes in a GTP-dependent manner. The chain is Elongation factor 4 from Chlamydia muridarum (strain MoPn / Nigg).